Consider the following 734-residue polypeptide: 1,4-alpha-glucan branching enzyme GlgB (734 aa).

The active-site Nucleophile is Asp413. Glu466 functions as the Proton donor in the catalytic mechanism.

This sequence belongs to the glycosyl hydrolase 13 family. GlgB subfamily. Monomer.

It carries out the reaction Transfers a segment of a (1-&gt;4)-alpha-D-glucan chain to a primary hydroxy group in a similar glucan chain.. It functions in the pathway glycan biosynthesis; glycogen biosynthesis. Functionally, catalyzes the formation of the alpha-1,6-glucosidic linkages in glycogen by scission of a 1,4-alpha-linked oligosaccharide from growing alpha-1,4-glucan chains and the subsequent attachment of the oligosaccharide to the alpha-1,6 position. The sequence is that of 1,4-alpha-glucan branching enzyme GlgB from Nitrosomonas europaea (strain ATCC 19718 / CIP 103999 / KCTC 2705 / NBRC 14298).